The following is a 312-amino-acid chain: 2-dehydropantoate 2-reductase (312 aa).

NADP(+)-binding positions include 7-12 (GAGAMG), asparagine 105, and alanine 131. Asparagine 105 serves as a coordination point for substrate. Lysine 187 serves as the catalytic Proton donor. 3 residues coordinate substrate: asparagine 191, asparagine 195, and serine 260. Residue glutamate 273 participates in NADP(+) binding.

The protein belongs to the ketopantoate reductase family.

The protein localises to the cytoplasm. The enzyme catalyses (R)-pantoate + NADP(+) = 2-dehydropantoate + NADPH + H(+). It functions in the pathway cofactor biosynthesis; (R)-pantothenate biosynthesis; (R)-pantoate from 3-methyl-2-oxobutanoate: step 2/2. In terms of biological role, catalyzes the NADPH-dependent reduction of ketopantoate into pantoic acid. This chain is 2-dehydropantoate 2-reductase, found in Lactococcus lactis subsp. lactis (strain IL1403) (Streptococcus lactis).